The chain runs to 60 residues: Probable tautomerase SP_1017 (60 aa).

Residue P2 is the Proton acceptor; via imino nitrogen of the active site.

It belongs to the 4-oxalocrotonate tautomerase family.

In Streptococcus pneumoniae serotype 4 (strain ATCC BAA-334 / TIGR4), this protein is Probable tautomerase SP_1017.